The following is a 250-amino-acid chain: tRNA (guanine-N(1)-)-methyltransferase (250 aa).

S-adenosyl-L-methionine-binding positions include glycine 113 and 133–138; that span reads IGDYVL.

Belongs to the RNA methyltransferase TrmD family. Homodimer.

The protein resides in the cytoplasm. The catalysed reaction is guanosine(37) in tRNA + S-adenosyl-L-methionine = N(1)-methylguanosine(37) in tRNA + S-adenosyl-L-homocysteine + H(+). Functionally, specifically methylates guanosine-37 in various tRNAs. The chain is tRNA (guanine-N(1)-)-methyltransferase from Photorhabdus laumondii subsp. laumondii (strain DSM 15139 / CIP 105565 / TT01) (Photorhabdus luminescens subsp. laumondii).